The sequence spans 630 residues: MGSHEQTADVTGQRFAALALAALGVVYGDIGTSPLYAVKEVFAGNHPIPVTMLNIYGSLSLIFWALVIVVSVKYVTFIMRADNRGEGGIMALIALALHTVHDKPQHAKWIMIVGVLGAAMFYGDGMVTPAMSVLSAVEGLEVATPALKPFVIPLTMVVLFILFFVQRSGTATVGAFFGPVMLVWFSALALLGVHNIVDHPAILMALNPAYGIEFLLENKAHSLVAMGNVVLAVTGAEALYADMGHFGRKPISRAWFAFVLPALVLNYFGQGALILGDPEAAKNPFFLSAPDWALYPLVGLATLATVIASQAVISGAFSVTRQAMQLGFVPRMEVQYTSDREQGQIYLPAVNWGLMVAVMILVLGFRSSNNLAAAYGIAVTGDMVITSILATVVVAKVWKWGWFKAGLLFACFLSVELVFLAANILKIPDGGWFPLVAGMGVFVLMTTWKRGRQLLSDRLRGERLELSMFLDSLASSMPTRVAGTAVFLNADPKGVPHALLHNLMHNKVLHERVVLLSVQFFDVPYVPDIDLVEVRQLKENFWSVVIQYGFKDIPNVPEALALCADAGLAFSSLETSYFIGRETLIPRLGSEMAFWREKIFVAMFRNAGSATAFFKIPSNRVVELGTQVVL.

12 consecutive transmembrane segments (helical) span residues 15-35 (FAAL…TSPL), 59-79 (LSLI…TFIM), 109-129 (WIMI…MVTP), 145-165 (PALK…LFFV), 173-193 (VGAF…LLGV), 223-243 (LVAM…YADM), 255-275 (WFAF…ALIL), 297-317 (LVGL…SGAF), 345-365 (IYLP…VLGF), 374-394 (AYGI…TVVV), 405-425 (AGLL…ANIL), and 427-447 (IPDG…LMTT).

Belongs to the HAK/KUP transporter (TC 2.A.72) family.

The protein localises to the cell inner membrane. It carries out the reaction K(+)(in) + H(+)(in) = K(+)(out) + H(+)(out). Transport of potassium into the cell. Likely operates as a K(+):H(+) symporter. This is Probable potassium transport system protein Kup 1 from Dechloromonas aromatica (strain RCB).